Here is a 605-residue protein sequence, read N- to C-terminus: Elongation factor 4 (605 aa).

Residues 9-192 (SRIRNFCIIA…AIIARVPSPA (184 aa)) enclose the tr-type G domain. Residues 21-26 (DHGKST) and 139-142 (NKID) each bind GTP.

This sequence belongs to the TRAFAC class translation factor GTPase superfamily. Classic translation factor GTPase family. LepA subfamily.

It is found in the cell inner membrane. It carries out the reaction GTP + H2O = GDP + phosphate + H(+). Its function is as follows. Required for accurate and efficient protein synthesis under certain stress conditions. May act as a fidelity factor of the translation reaction, by catalyzing a one-codon backward translocation of tRNAs on improperly translocated ribosomes. Back-translocation proceeds from a post-translocation (POST) complex to a pre-translocation (PRE) complex, thus giving elongation factor G a second chance to translocate the tRNAs correctly. Binds to ribosomes in a GTP-dependent manner. The chain is Elongation factor 4 from Chlorobium phaeovibrioides (strain DSM 265 / 1930) (Prosthecochloris vibrioformis (strain DSM 265)).